A 384-amino-acid chain; its full sequence is MNVERTQELLVNMGPQHPSTHGVLRLMIKLDGEQVTWCEPDIGYLHRCFEKLAEQKTYPQVIPFTDRTDYLAAMLNELCYVEAVEKLFGDAIQVPERAQYIRVMLAELQRITSHLLALGSMAMDLGATTPFLYCWRDREKLYSLFERITGGRMLYNYLRIGGVRNDLPEGILGTPQDGEDKADKTIWGFINYFDSYVYPEWKALVTGNRIFQYRTKNIGVLTAEQAIAYSCSGAVLRGSGVKWDLRKNLPYAIYDRFEFDIPVGQNGDSFDRWWVRQEEMYQSSRIVKQCLEWLAENPGPVMAPKMPRVLKPPKGEVYHRIEGARGEVACYVVSDGSTNPYKVKWRSPAFTHLQLMPLLCPGHKIADIIAILGSIDVVLGEVDR.

The protein belongs to the complex I 49 kDa subunit family. In terms of assembly, NDH-1 is composed of 14 different subunits. Subunits NuoB, C, D, E, F, and G constitute the peripheral sector of the complex.

It is found in the cell membrane. The enzyme catalyses a quinone + NADH + 5 H(+)(in) = a quinol + NAD(+) + 4 H(+)(out). NDH-1 shuttles electrons from NADH, via FMN and iron-sulfur (Fe-S) centers, to quinones in the respiratory chain. The immediate electron acceptor for the enzyme in this species is believed to be a menaquinone. Couples the redox reaction to proton translocation (for every two electrons transferred, four hydrogen ions are translocated across the cytoplasmic membrane), and thus conserves the redox energy in a proton gradient. This Symbiobacterium thermophilum (strain DSM 24528 / JCM 14929 / IAM 14863 / T) protein is NADH-quinone oxidoreductase subunit D 2.